We begin with the raw amino-acid sequence, 154 residues long: Urease subunit alpha (154 aa).

A Urease domain is found at 38–154 (GGIDTHIHFI…ADEMDIQVAI (117 aa)). Ni(2+)-binding residues include His43, His45, and Lys126. At Lys126 the chain carries N6-carboxylysine. His128 serves as a coordination point for substrate.

This sequence belongs to the metallo-dependent hydrolases superfamily. Urease alpha subunit family. In terms of assembly, heterotrimer of UreA (gamma), UreB (beta) and UreC (alpha) subunits. Three heterotrimers associate to form the active enzyme. Ni cation is required as a cofactor. In terms of processing, carboxylation allows a single lysine to coordinate two nickel ions.

It is found in the cytoplasm. The catalysed reaction is urea + 2 H2O + H(+) = hydrogencarbonate + 2 NH4(+). It participates in nitrogen metabolism; urea degradation; CO(2) and NH(3) from urea (urease route): step 1/1. In Photobacterium damselae subsp. damselae (Listonella damsela), this protein is Urease subunit alpha (ureC).